The following is a 450-amino-acid chain: UDP-N-acetylmuramoylalanine--D-glutamate ligase (450 aa).

119–125 (GSNGKTT) lines the ATP pocket.

The protein belongs to the MurCDEF family.

It localises to the cytoplasm. It catalyses the reaction UDP-N-acetyl-alpha-D-muramoyl-L-alanine + D-glutamate + ATP = UDP-N-acetyl-alpha-D-muramoyl-L-alanyl-D-glutamate + ADP + phosphate + H(+). Its pathway is cell wall biogenesis; peptidoglycan biosynthesis. Cell wall formation. Catalyzes the addition of glutamate to the nucleotide precursor UDP-N-acetylmuramoyl-L-alanine (UMA). This is UDP-N-acetylmuramoylalanine--D-glutamate ligase from Streptococcus pneumoniae (strain JJA).